Consider the following 115-residue polypeptide: UPF0102 protein NMB2089 (115 aa).

This sequence belongs to the UPF0102 family.

This chain is UPF0102 protein NMB2089, found in Neisseria meningitidis serogroup B (strain ATCC BAA-335 / MC58).